An 88-amino-acid chain; its full sequence is MANTAQALKRIRQTNKARAQNASQRSTIRTVMKKFLKAIEAKDIATAEQEFSTAASLLDRAAQKHIIHKNKASRLKSRMHAKKKALVA.

Positions 1–25 (MANTAQALKRIRQTNKARAQNASQR) are disordered. Over residues 16-25 (KARAQNASQR) the composition is skewed to polar residues.

The protein belongs to the bacterial ribosomal protein bS20 family.

Binds directly to 16S ribosomal RNA. The polypeptide is Small ribosomal subunit protein bS20 (Dichelobacter nodosus (strain VCS1703A)).